Here is a 252-residue protein sequence, read N- to C-terminus: 3-deoxy-manno-octulosonate cytidylyltransferase (252 aa).

The protein belongs to the KdsB family.

The protein localises to the cytoplasm. The catalysed reaction is 3-deoxy-alpha-D-manno-oct-2-ulosonate + CTP = CMP-3-deoxy-beta-D-manno-octulosonate + diphosphate. Its pathway is nucleotide-sugar biosynthesis; CMP-3-deoxy-D-manno-octulosonate biosynthesis; CMP-3-deoxy-D-manno-octulosonate from 3-deoxy-D-manno-octulosonate and CTP: step 1/1. The protein operates within bacterial outer membrane biogenesis; lipopolysaccharide biosynthesis. In terms of biological role, activates KDO (a required 8-carbon sugar) for incorporation into bacterial lipopolysaccharide in Gram-negative bacteria. The sequence is that of 3-deoxy-manno-octulosonate cytidylyltransferase from Xylella fastidiosa (strain Temecula1 / ATCC 700964).